The sequence spans 205 residues: Small ribosomal subunit protein uS4 (205 aa).

The region spanning 103–173 (RRLQTIVMKK…LEKSKRAEAA (71 aa)) is the S4 RNA-binding domain. The segment at 174–205 (AREAAAEAAEAEQAAAQAAAPTPAPAAAAPKQ) is disordered. The span at 179–205 (AEAAEAEQAAAQAAAPTPAPAAAAPKQ) shows a compositional bias: low complexity.

It belongs to the universal ribosomal protein uS4 family. As to quaternary structure, part of the 30S ribosomal subunit. Contacts protein S5. The interaction surface between S4 and S5 is involved in control of translational fidelity.

In terms of biological role, one of the primary rRNA binding proteins, it binds directly to 16S rRNA where it nucleates assembly of the body of the 30S subunit. Its function is as follows. With S5 and S12 plays an important role in translational accuracy. The protein is Small ribosomal subunit protein uS4 of Cenarchaeum symbiosum (strain A).